The following is a 199-amino-acid chain: MSVYTRPLARLIEHLQKLPGVGPKTAQRLALHLIQRPEAEIAAFAEALLAAKQQVGHCQRCFHLSSEDLCNICRDPKRDAQTICVVADPRDVIALEKTREYKGLYHVLGGLISPMDGIGPEQLTVQALVRRVAQEQTQEVIMAISPSVEGETTTLYVGQLLKPFTRVTRIAFGLPMGGDLEYADEVTLARALEGRRDLT.

The segment at 58–73 (CQRCFHLSSEDLCNIC) adopts a C4-type zinc-finger fold. The Toprim domain occupies 81 to 175 (QTICVVADPR…RVTRIAFGLP (95 aa)).

The protein belongs to the RecR family.

May play a role in DNA repair. It seems to be involved in an RecBC-independent recombinational process of DNA repair. It may act with RecF and RecO. This is Recombination protein RecR from Synechococcus elongatus (strain ATCC 33912 / PCC 7942 / FACHB-805) (Anacystis nidulans R2).